A 613-amino-acid chain; its full sequence is MADGVFQGAIGIDLGTTYSCVATYDSAVEIIANEQGNRVTPSFVAFTSEERLIGDAAKNQAALNPKNTVFDAKRLIGRAFDDESVQKDIKSWPFKVVESNGQPLIEVEYLDETKTFSPQEISSMVLTKMKEIAEAKIGKKVEKAVVTVPAYFNDAQRQATKDAGAIAGLNVLRIINEPTAAAIAYGLGAGKSEKERHVLIFDLGGGTFDVSLLNITGGVFTVKATAGDTHLGGQDFDTNLLEHFKKEFQKKTGNDISSDARALRRLRTACERAKRSLSSGTQTTVEIDSLFDGEDFSANITRARFEDINSALFKSTLEPVEQVLKDAKISKSQVDEVVLVGGSTRIPKVQKLLSDFFDGKQLEKSINPDEAVAYGAAVQGAILTGQSTNDDTKDLLLLDVIPLSLGVAMQGNVFAPVVPRNTTVPTIKRRTFTTVADHQTTVQFPVYQGERVNCTENTLLGEFDLKNIPPMQAGEPVLEAIFEVDANGILKVTAVEKSTGRSANITISNSIGRLSTEEIEKMISDAEKFKSSDDAFAKRHEQKQKLEAYVASVESTVTDPVLSAKLKKSAKDKIEAALSDALQTLEIEESSADDYRKAELALKRAVTKGMATR.

The nucleotide binding domain (NBD) stretch occupies residues 1–391; that stretch reads MADGVFQGAI…ILTGQSTNDD (391 aa). ATP-binding positions include 16 to 18, Lys73, 205 to 207, 271 to 278, and Gly342; these read TTY, GGT, and ERAKRSLS. Residues 392 to 402 form an inter-domain linker region; that stretch reads TKDLLLLDVIP. Residues 403–613 form a substrate binding domain (SBD) region; the sequence is LSLGVAMQGN…RAVTKGMATR (211 aa). The tract at residues 516–612 is lid domain (SBDalpha); that stretch reads TEEIEKMISD…KRAVTKGMAT (97 aa). The Nuclear export signal signature appears at 574-582; the sequence is IEAALSDAL.

This sequence belongs to the heat shock protein 70 family. Ssb-type Hsp70 subfamily. In terms of assembly, binds to ribosomes. Binds close to the ribosomal tunnel exit via contacts with both ribosomal proteins and rRNA. Directly interacts with nascent polypeptides. This interaction is dependent on the ribosome-associated complex (RAC). Interacts with SSE1. Interacts with FES1.

The protein resides in the cytoplasm. The catalysed reaction is ATP + H2O = ADP + phosphate + H(+). Functionally, ribosome-bound, Hsp70-type chaperone that assists in the cotranslational folding of newly synthesized proteins in the cytosol. Stimulates folding by interacting with nascent chains, binding to short, largely hydrophobic sequences exposed by unfolded proteins, thereby stabilizing longer, more slowly translated, and aggregation-prone nascent polypeptides and domains that cannot fold stably until fully synthesized. The Hsp70-protein substrate interaction depends on ATP-binding and on allosteric regulation between the NBD and the SBD. The ATP-bound state is characterized by a fast exchange rate of substrate (low affinity state), while in the ADP-bound state exchange is much slower (high affinity state). During the Hsp70 cycle, the chaperone switches between the ATP-bound state (open conformation) and the ADP-bound state (closed conformation) by major conformational rearrangements involving mainly the lid domain. Ssb cooperates with a specific Hsp40/Hsp70 co-chaperone termed the ribosome-associated complex (RAC), which stimulates the ATPase activity of the ribosome-associated pool of Ssbs and switches it to the high affinity substrate binding state. Hsp110 chaperone SSE1 and FES1 act as nucleotide exchange factors that cause substrate release. The polypeptide is Ribosome-associated molecular chaperone SSB1 (SSB1) (Candida albicans (strain WO-1) (Yeast)).